The chain runs to 433 residues: Adenosylhomocysteinase B (433 aa).

T57, D132, E157, K187, and D191 together coordinate substrate. Positions 184 to 351 (SVTKSKFDNL…EGRLVNLGCA (168 aa)) are NAD binding.

It belongs to the adenosylhomocysteinase family. As to quaternary structure, homotetramer. It depends on NAD(+) as a cofactor.

Its subcellular location is the cytoplasm. It catalyses the reaction S-adenosyl-L-homocysteine + H2O = L-homocysteine + adenosine. It participates in amino-acid biosynthesis; L-homocysteine biosynthesis; L-homocysteine from S-adenosyl-L-homocysteine: step 1/1. Functionally, catalyzes the hydrolysis of S-adenosyl-L-homocysteine to form adenosine and homocysteine. Binds copper ions. This chain is Adenosylhomocysteinase B (ahcy-b), found in Xenopus laevis (African clawed frog).